We begin with the raw amino-acid sequence, 445 residues long: AAPGSSPHQVYNITWEVTNGDRETVWAISGNHPLWTWWPVLTPDLCMLALHGPPHWGLEYQAPYSSPPGPPCCSGSGGSSPGCSRDCNEPLTSLTPRCNTAWNRLKLDQVTHKSSEGFYVCPGSHRPREAKSCGGPDSFYCASWGCETTGRAYWKPSSSWDYITVDNNLTTNQAVQVCKDNKWCNPLAIQFTNAGRQVTSWITGHYWGLRLYVSGQDPGLTFGIRLKYQNLGPRVPIGPNPVLADQLSFPLPNPLPKPAKSPPVSNSTPTMISPSPTPTQPPPAGTGDRLLNLVQGAYQALNLTNPDKTQECWLCLVSGPPYYEGVAVLGTYSNHTSAPTNCSVASQHKLTLSEVTGRGLCIGTVPKTHQALCNTTLKTNKGSYYLVAPAGTTWACNTGLTPCLSATVLNRTTDYCVLVELWPRVTYHPPSYVYSQFEKSYRHKR.

The Extracellular segment spans residues 1–445 (AAPGSSPHQV…QFEKSYRHKR (445 aa)). Asn-12 carries an N-linked (GlcNAc...) (hybrid) asparagine; by host glycan. Disulfide bonds link Cys-46–Cys-98, Cys-72–Cys-87, Cys-73–Cys-83, Cys-121–Cys-141, and Cys-133–Cys-146. His-55 contacts Zn(2+). A Zn(2+)-binding site is contributed by Asp-86. Asn-168 is a glycosylation site (N-linked (GlcNAc...) (high mannose) asparagine; by host). Residues Cys-178 and Cys-184 are joined by a disulfide bond. Positions 253 to 286 (NPLPKPAKSPPVSNSTPTMISPSPTPTQPPPAGT) are disordered. Over residues 262-274 (PPVSNSTPTMISP) the composition is skewed to low complexity. Asn-266 is a glycosylation site (N-linked (GlcNAc...) (polylactosaminoglycan) asparagine; by host). An O-linked (GalNAc...) threonine; by host glycan is attached at Thr-268. Residues Ser-273 and Ser-275 are each glycosylated (O-linked (GalNAc...) serine; by host). Positions 275-284 (SPTPTQPPPA) are enriched in pro residues. 2 O-linked (GalNAc...) threonine; by host glycosylation sites follow: Thr-277 and Thr-279. The N-linked (GlcNAc...) (polylactosaminoglycan) asparagine; by host glycan is linked to Asn-302. O-linked (GalNAc...) threonine; by host glycosylation is found at Thr-304 and Thr-309. Residues Cys-312 and Cys-315 are joined by a disulfide bond. Positions 312–315 (CWLC) match the CXXC motif. 2 N-linked (GlcNAc...) (high mannose) asparagine; by host; alternate glycosylation sites follow: Asn-334 and Asn-341. 2 N-linked (GlcNAc...) (hybrid) asparagine; by host; alternate glycosylation sites follow: Asn-334 and Asn-341. N-linked (GlcNAc...) (polylactosaminoglycan) asparagine; by host; alternate glycans are attached at residues Asn-334 and Asn-341. Intrachain disulfides connect Cys-342/Cys-396, Cys-361/Cys-373, and Cys-403/Cys-416. The N-linked (GlcNAc...) (polylactosaminoglycan) asparagine; by host glycan is linked to Asn-374. An N-linked (GlcNAc...) (high mannose) asparagine; by host; alternate glycan is attached at Asn-410. Asn-410 is a glycosylation site (N-linked (GlcNAc...) (polylactosaminoglycan) asparagine; by host; alternate).

As to quaternary structure, the mature envelope protein (Env) consists of a trimer of SU-TM heterodimers attached by a labile interchain disulfide bond. Specific enzymatic cleavages in vivo yield mature proteins. Envelope glycoproteins are synthesized as an inactive precursor that is N-glycosylated and processed likely by host cell furin or by a furin-like protease in the Golgi to yield the mature SU and TM proteins. The cleavage site between SU and TM requires the minimal sequence [KR]-X-[KR]-R.

The protein resides in the virion membrane. Its subcellular location is the host cell membrane. The surface protein (SU) attaches the virus to the host cell by binding to its receptor. This interaction triggers the refolding of the transmembrane protein (TM) and is thought to activate its fusogenic potential by unmasking its fusion peptide. Fusion occurs at the host cell plasma membrane. The polypeptide is Envelope glycoprotein (env) (Friend murine leukemia virus (FrMLV)).